A 314-amino-acid polypeptide reads, in one-letter code: L-lactate dehydrogenase 1 (314 aa).

Residues Val-16, Asp-37, Lys-42, Tyr-68, and 82 to 83 (GL) contribute to the NAD(+) site. Substrate-binding positions include Gln-85, Arg-91, and 123-126 (NPVD). Residues 121 to 123 (ATN) and Ser-146 each bind NAD(+). Residue 151-154 (DSAR) coordinates substrate. Residues Arg-156 and His-171 each contribute to the beta-D-fructose 1,6-bisphosphate site. His-178 functions as the Proton acceptor in the catalytic mechanism. A Phosphotyrosine modification is found at Tyr-223. Substrate is bound at residue Thr-232.

Belongs to the LDH/MDH superfamily. LDH family. In terms of assembly, homotetramer.

The protein resides in the cytoplasm. The catalysed reaction is (S)-lactate + NAD(+) = pyruvate + NADH + H(+). It participates in fermentation; pyruvate fermentation to lactate; (S)-lactate from pyruvate: step 1/1. With respect to regulation, allosterically activated by fructose 1,6-bisphosphate (FBP). In terms of biological role, catalyzes the conversion of lactate to pyruvate. This Bacillus anthracis protein is L-lactate dehydrogenase 1.